We begin with the raw amino-acid sequence, 196 residues long: Protein LSM12 homolog B (196 aa).

In terms of domain architecture, Sm spans 3 to 70 (APGPGEYFSV…LAYVSEVDII (68 aa)). Residues 81 to 175 (ASLNFNKLVN…IVEKHFRDVE (95 aa)) form the AD domain.

The protein belongs to the LSM12 family.

This Danio rerio (Zebrafish) protein is Protein LSM12 homolog B (lsm12b).